We begin with the raw amino-acid sequence, 253 residues long: Endonuclease NucS (253 aa).

The disordered stretch occupies residues 63 to 91; that stretch reads IDDPDTDFTDGSSVGNSEEQGTDGSAHTA. Residues 71–87 are compositionally biased toward polar residues; it reads TDGSSVGNSEEQGTDGS.

This sequence belongs to the NucS endonuclease family.

It localises to the cytoplasm. Functionally, cleaves both 3' and 5' ssDNA extremities of branched DNA structures. This chain is Endonuclease NucS, found in Corynebacterium kroppenstedtii (strain DSM 44385 / JCM 11950 / CIP 105744 / CCUG 35717).